A 290-amino-acid chain; its full sequence is MRIADYSVTKAVLERHGFTFKKSFGQNFLTDTNILQKIVDTAEINKNVNVIEIGPGIGALTEFLAENASEVMAFEIDERLVPILEDTLRDHDNVKVINEDVLKADLQTRVKEFENPDLPIKVVANLPYYITTPILMHLIESKIPFSEFVVMMQKEVADRISAEPNTKAYGSLSIAVQYYMTTKMAFAVPRTVFVPAPNVDSAILKMTRRKQPLVEVKDEDFFFRVSKASFLHRRKTLWNNLTSHFGKSEEVKNKLDQALENAAIKPSIRGEALSISDFARLSDALREAGL.

Residues Asn27, Leu29, Gly54, Glu75, Asp100, and Asn125 each coordinate S-adenosyl-L-methionine.

Belongs to the class I-like SAM-binding methyltransferase superfamily. rRNA adenine N(6)-methyltransferase family. RsmA subfamily.

It localises to the cytoplasm. The catalysed reaction is adenosine(1518)/adenosine(1519) in 16S rRNA + 4 S-adenosyl-L-methionine = N(6)-dimethyladenosine(1518)/N(6)-dimethyladenosine(1519) in 16S rRNA + 4 S-adenosyl-L-homocysteine + 4 H(+). Its function is as follows. Specifically dimethylates two adjacent adenosines (A1518 and A1519) in the loop of a conserved hairpin near the 3'-end of 16S rRNA in the 30S particle. May play a critical role in biogenesis of 30S subunits. The sequence is that of Ribosomal RNA small subunit methyltransferase A from Streptococcus thermophilus (strain ATCC BAA-250 / LMG 18311).